We begin with the raw amino-acid sequence, 362 residues long: GTPase Obg (362 aa).

The region spanning M1 to L159 is the Obg domain. The interval H129–E148 is disordered. Over residues F130–K141 the composition is skewed to polar residues. In terms of domain architecture, OBG-type G spans A160–D334. GTP contacts are provided by residues G166–S173, F191–H195, D213–G216, N284–D287, and S315–L317. Mg(2+) contacts are provided by S173 and T193. A disordered region spans residues R340–D362.

The protein belongs to the TRAFAC class OBG-HflX-like GTPase superfamily. OBG GTPase family. Monomer. Mg(2+) serves as cofactor.

It is found in the cytoplasm. Its function is as follows. An essential GTPase which binds GTP, GDP and possibly (p)ppGpp with moderate affinity, with high nucleotide exchange rates and a fairly low GTP hydrolysis rate. Plays a role in control of the cell cycle, stress response, ribosome biogenesis and in those bacteria that undergo differentiation, in morphogenesis control. The chain is GTPase Obg from Polynucleobacter asymbioticus (strain DSM 18221 / CIP 109841 / QLW-P1DMWA-1) (Polynucleobacter necessarius subsp. asymbioticus).